The following is a 245-amino-acid chain: tRNA pseudouridine synthase A (245 aa).

Asp52 serves as the catalytic Nucleophile. Tyr111 lines the substrate pocket.

The protein belongs to the tRNA pseudouridine synthase TruA family. As to quaternary structure, homodimer.

The catalysed reaction is uridine(38/39/40) in tRNA = pseudouridine(38/39/40) in tRNA. Its function is as follows. Formation of pseudouridine at positions 38, 39 and 40 in the anticodon stem and loop of transfer RNAs. This Rickettsia peacockii (strain Rustic) protein is tRNA pseudouridine synthase A.